A 377-amino-acid chain; its full sequence is Benzylmalonyl-CoA dehydrogenase (377 aa).

FAD is bound by residues 123-132 (ICMTEPNAGS), 156-158 (WIT), Arg-266, Gln-277, and 363-365 (TSE).

The protein belongs to the acyl-CoA dehydrogenase family. In terms of assembly, homotetramer. FAD serves as cofactor.

It catalyses the reaction (2-aminobenzyl)malonyl-CoA + O2 + H(+) = (E)-2-aminocinnamoyl-CoA + H2O2 + CO2. The enzyme catalyses benzylmalonyl-CoA + O2 + H(+) = (E)-cinnamoyl-CoA + H2O2 + CO2. Involved in degradation of indoleacetate, the most common member of the auxin class of plant hormones. Catalyzes the irreversible oxidative decarboxylation of (2-aminobenzyl)malonyl-CoA to 2-aminocinnamoyl-CoA and CO(2). In vitro, shows high catalytic efficiency with benzylmalonyl-CoA, a chemical analog of the physiological substrate, but otherwise accepts only a few medium-chain alkylmalonyl-CoA compounds as alternative substrates with low activities. The protein is Benzylmalonyl-CoA dehydrogenase of Aromatoleum aromaticum (strain DSM 19018 / LMG 30748 / EbN1) (Azoarcus sp. (strain EbN1)).